The chain runs to 187 residues: Protein GrpE (187 aa).

The tract at residues 1–26 (MHDPKESLETNIQETESQEKLPETPI) is disordered.

This sequence belongs to the GrpE family. In terms of assembly, homodimer.

The protein localises to the cytoplasm. Participates actively in the response to hyperosmotic and heat shock by preventing the aggregation of stress-denatured proteins, in association with DnaK and GrpE. It is the nucleotide exchange factor for DnaK and may function as a thermosensor. Unfolded proteins bind initially to DnaJ; upon interaction with the DnaJ-bound protein, DnaK hydrolyzes its bound ATP, resulting in the formation of a stable complex. GrpE releases ADP from DnaK; ATP binding to DnaK triggers the release of the substrate protein, thus completing the reaction cycle. Several rounds of ATP-dependent interactions between DnaJ, DnaK and GrpE are required for fully efficient folding. This is Protein GrpE from Dichelobacter nodosus (strain VCS1703A).